A 462-amino-acid polypeptide reads, in one-letter code: MDQYREEHDAIGTVQVPASALWGAQTQRSLNNFNISGERMPSALIHALALVKRAAASVNHDLGLLDENIARAIITAADEVLAGEHAGEFPLVVWQTGSGTQTNMNMNEVLANRASEILGGTRGKGRKVHPNDHVNKGQSSNDVFPTAMHIAAVEAIRNRLIPALEALRKTLSSKSAAFSDIVKIGRTHLQDATPLTLGQEFSGYVSQLDHGLAHLESALPHLLELALGGTAVGTGLNTHPEFARRVAAEIARLSGYPFITAANKFEALAAHDALVHAHGVLKTLAAILIKIANDVRWLASGPRCGIGEILIPENEPGSSIMPGKVNPTQSEAVVMLACQVMGNDVAINLGGAMGNFELNTMKPLIIHNFLQSTRLLADGAESFNTHCAAGITANTVRIKQHLQESLMLVTALNPHIGYDKAAEIAKKAHHEMLTLKEAAIRLGYVTAEQFDVWVDPQKMTEV.

Residues S98–T100, R126, H129–D132, S139–N141, and T187 contribute to the substrate site. Residues G120–N141 form a disordered region. The Proton donor/acceptor role is filled by H188. Residue S318 is part of the active site. Residues S319 and K324 to N326 contribute to the substrate site.

The protein belongs to the class-II fumarase/aspartase family. Fumarase subfamily. In terms of assembly, homotetramer.

The protein resides in the cytoplasm. It carries out the reaction (S)-malate = fumarate + H2O. Its pathway is carbohydrate metabolism; tricarboxylic acid cycle; (S)-malate from fumarate: step 1/1. Functionally, involved in the TCA cycle. Catalyzes the stereospecific interconversion of fumarate to L-malate. The sequence is that of Fumarate hydratase class II from Nitrosomonas europaea (strain ATCC 19718 / CIP 103999 / KCTC 2705 / NBRC 14298).